We begin with the raw amino-acid sequence, 143 residues long: Large-conductance mechanosensitive channel (143 aa).

The next 2 membrane-spanning stretches (helical) occupy residues 16–36 and 84–104; these read VIDL…VTAL and INTV…VKLI.

It belongs to the MscL family. Homopentamer.

The protein localises to the cell inner membrane. In terms of biological role, channel that opens in response to stretch forces in the membrane lipid bilayer. May participate in the regulation of osmotic pressure changes within the cell. This Xanthomonas campestris pv. campestris (strain 8004) protein is Large-conductance mechanosensitive channel.